The primary structure comprises 83 residues: Large ribosomal subunit protein bL28 (83 aa).

The protein belongs to the bacterial ribosomal protein bL28 family.

The chain is Large ribosomal subunit protein bL28 from Amoebophilus asiaticus (strain 5a2).